Consider the following 160-residue polypeptide: Putative pre-16S rRNA nuclease (160 aa).

The protein belongs to the YqgF nuclease family.

It is found in the cytoplasm. In terms of biological role, could be a nuclease involved in processing of the 5'-end of pre-16S rRNA. This chain is Putative pre-16S rRNA nuclease, found in Cereibacter sphaeroides (strain KD131 / KCTC 12085) (Rhodobacter sphaeroides).